Reading from the N-terminus, the 76-residue chain is Exodeoxyribonuclease 7 small subunit (76 aa).

It belongs to the XseB family. In terms of assembly, heterooligomer composed of large and small subunits.

The protein resides in the cytoplasm. It catalyses the reaction Exonucleolytic cleavage in either 5'- to 3'- or 3'- to 5'-direction to yield nucleoside 5'-phosphates.. Its function is as follows. Bidirectionally degrades single-stranded DNA into large acid-insoluble oligonucleotides, which are then degraded further into small acid-soluble oligonucleotides. This chain is Exodeoxyribonuclease 7 small subunit, found in Methylococcus capsulatus (strain ATCC 33009 / NCIMB 11132 / Bath).